Reading from the N-terminus, the 369-residue chain is Allantoicase (369 aa).

Positions proline 341 to glutamine 369 are disordered. The span at asparagine 345–asparagine 357 shows a compositional bias: low complexity.

It belongs to the allantoicase family.

The enzyme catalyses allantoate + H2O = (S)-ureidoglycolate + urea. It functions in the pathway nitrogen metabolism; (S)-allantoin degradation; (S)-ureidoglycolate from allantoate (aminidohydrolase route): step 1/1. Utilization of purines as secondary nitrogen sources, when primary sources are limiting. In Dictyostelium discoideum (Social amoeba), this protein is Allantoicase (allC).